The primary structure comprises 437 residues: Tryptophan--tRNA ligase (437 aa).

The short motif at 74 to 82 (PSGKVHLGH) is the 'HIGH' region element. The 'KMSKS' region signature appears at 321–325 (KMSSS).

Belongs to the class-I aminoacyl-tRNA synthetase family.

The protein localises to the cytoplasm. The catalysed reaction is tRNA(Trp) + L-tryptophan + ATP = L-tryptophyl-tRNA(Trp) + AMP + diphosphate + H(+). The protein is Tryptophan--tRNA ligase of Methanosarcina acetivorans (strain ATCC 35395 / DSM 2834 / JCM 12185 / C2A).